A 471-amino-acid chain; its full sequence is UDP-N-acetylmuramate--L-alanine ligase (471 aa).

112-118 (GTHGKTT) lines the ATP pocket.

Belongs to the MurCDEF family.

It is found in the cytoplasm. The enzyme catalyses UDP-N-acetyl-alpha-D-muramate + L-alanine + ATP = UDP-N-acetyl-alpha-D-muramoyl-L-alanine + ADP + phosphate + H(+). It participates in cell wall biogenesis; peptidoglycan biosynthesis. Cell wall formation. In Aromatoleum aromaticum (strain DSM 19018 / LMG 30748 / EbN1) (Azoarcus sp. (strain EbN1)), this protein is UDP-N-acetylmuramate--L-alanine ligase.